A 635-amino-acid polypeptide reads, in one-letter code: Threonine--tRNA ligase (635 aa).

Residues 1-61 (MIKITLKDGK…HKDSSLEILT (61 aa)) enclose the TGS domain. The catalytic stretch occupies residues 242–532 (DHRKLGKELD…LIEQYAGAFP (291 aa)). Residues Cys-333, His-384, and His-509 each coordinate Zn(2+).

Belongs to the class-II aminoacyl-tRNA synthetase family. As to quaternary structure, homodimer. Zn(2+) serves as cofactor.

The protein resides in the cytoplasm. The catalysed reaction is tRNA(Thr) + L-threonine + ATP = L-threonyl-tRNA(Thr) + AMP + diphosphate + H(+). Functionally, catalyzes the attachment of threonine to tRNA(Thr) in a two-step reaction: L-threonine is first activated by ATP to form Thr-AMP and then transferred to the acceptor end of tRNA(Thr). Also edits incorrectly charged L-seryl-tRNA(Thr). This Clostridium botulinum (strain Okra / Type B1) protein is Threonine--tRNA ligase.